Here is a 360-residue protein sequence, read N- to C-terminus: Holliday junction branch migration complex subunit RuvB (360 aa).

The interval 1–46 (MAIKRSGNSDRPAKNPSSTPGTNAPTLLSPTPTHQEKETSEEKIRP) is disordered. Positions 13–205 (AKNPSSTPGT…FGLIQRLRFY (193 aa)) are large ATPase domain (RuvB-L). The span at 15–33 (NPSSTPGTNAPTLLSPTPT) shows a compositional bias: polar residues. The span at 34–46 (HQEKETSEEKIRP) shows a compositional bias: basic and acidic residues. Residues I44, R45, G86, K89, T90, T91, 152 to 154 (EDY), R195, Y205, and R242 contribute to the ATP site. Residue T90 coordinates Mg(2+). The segment at 206–276 (EVDELTLIVL…LASEALDIYQ (71 aa)) is small ATPAse domain (RuvB-S). The head domain (RuvB-H) stretch occupies residues 279–360 (KQGLDWIDRL…LTSEEQLSIF (82 aa)). The DNA site is built by R334 and R339.

This sequence belongs to the RuvB family. In terms of assembly, homohexamer. Forms an RuvA(8)-RuvB(12)-Holliday junction (HJ) complex. HJ DNA is sandwiched between 2 RuvA tetramers; dsDNA enters through RuvA and exits via RuvB. An RuvB hexamer assembles on each DNA strand where it exits the tetramer. Each RuvB hexamer is contacted by two RuvA subunits (via domain III) on 2 adjacent RuvB subunits; this complex drives branch migration. In the full resolvosome a probable DNA-RuvA(4)-RuvB(12)-RuvC(2) complex forms which resolves the HJ.

The protein resides in the cytoplasm. It carries out the reaction ATP + H2O = ADP + phosphate + H(+). In terms of biological role, the RuvA-RuvB-RuvC complex processes Holliday junction (HJ) DNA during genetic recombination and DNA repair, while the RuvA-RuvB complex plays an important role in the rescue of blocked DNA replication forks via replication fork reversal (RFR). RuvA specifically binds to HJ cruciform DNA, conferring on it an open structure. The RuvB hexamer acts as an ATP-dependent pump, pulling dsDNA into and through the RuvAB complex. RuvB forms 2 homohexamers on either side of HJ DNA bound by 1 or 2 RuvA tetramers; 4 subunits per hexamer contact DNA at a time. Coordinated motions by a converter formed by DNA-disengaged RuvB subunits stimulates ATP hydrolysis and nucleotide exchange. Immobilization of the converter enables RuvB to convert the ATP-contained energy into a lever motion, pulling 2 nucleotides of DNA out of the RuvA tetramer per ATP hydrolyzed, thus driving DNA branch migration. The RuvB motors rotate together with the DNA substrate, which together with the progressing nucleotide cycle form the mechanistic basis for DNA recombination by continuous HJ branch migration. Branch migration allows RuvC to scan DNA until it finds its consensus sequence, where it cleaves and resolves cruciform DNA. This Rippkaea orientalis (strain PCC 8801 / RF-1) (Cyanothece sp. (strain PCC 8801)) protein is Holliday junction branch migration complex subunit RuvB.